A 281-amino-acid polypeptide reads, in one-letter code: NADPH-dependent 7-cyano-7-deazaguanine reductase (281 aa).

87-89 provides a ligand contact to substrate; the sequence is VES. Position 89 to 90 (89 to 90) interacts with NADPH; it reads SK. The active-site Thioimide intermediate is cysteine 188. The active-site Proton donor is the aspartate 195. 227 to 228 lines the substrate pocket; the sequence is HE. 256 to 257 serves as a coordination point for NADPH; it reads RG.

The protein belongs to the GTP cyclohydrolase I family. QueF type 2 subfamily. In terms of assembly, homodimer.

Its subcellular location is the cytoplasm. It carries out the reaction 7-aminomethyl-7-carbaguanine + 2 NADP(+) = 7-cyano-7-deazaguanine + 2 NADPH + 3 H(+). It participates in tRNA modification; tRNA-queuosine biosynthesis. Catalyzes the NADPH-dependent reduction of 7-cyano-7-deazaguanine (preQ0) to 7-aminomethyl-7-deazaguanine (preQ1). The protein is NADPH-dependent 7-cyano-7-deazaguanine reductase of Aliivibrio salmonicida (strain LFI1238) (Vibrio salmonicida (strain LFI1238)).